A 173-amino-acid chain; its full sequence is Bursicon (173 aa).

A signal peptide spans 1 to 32 (MLRHLLRHENNKVFVLILLYCVLVSILKLCTA). Disulfide bonds link cysteine 52-cysteine 101, cysteine 66-cysteine 115, cysteine 76-cysteine 136, cysteine 80-cysteine 138, and cysteine 98-cysteine 141. The CTCK domain occupies 52–142 (CQVTPVIHVL…PLECMCRPCT (91 aa)).

Heterodimer of Burs and Pburs. In terms of tissue distribution, expressed in one to two pairs of neurons in each of the thoracic and abdominal neuromeres of the larval CNS. Coexpressed with CCAP in most CCAP-specific neurons. Coexpressed with Pburs in four bilateral neurons in thoracic and abdominal neuromeres of the ventral nervous system.

It is found in the secreted. In terms of biological role, final heterodimeric neurohormone released at the end of the molting cycle, involved in the sclerotization (tanning) of the insect cuticle, melanization and wing spreading. Heterodimer specifically activates the G protein-coupled receptor rk. This Drosophila melanogaster (Fruit fly) protein is Bursicon.